Here is a 188-residue protein sequence, read N- to C-terminus: Probable nicotinate-nucleotide adenylyltransferase (188 aa).

The protein belongs to the NadD family.

The enzyme catalyses nicotinate beta-D-ribonucleotide + ATP + H(+) = deamido-NAD(+) + diphosphate. The protein operates within cofactor biosynthesis; NAD(+) biosynthesis; deamido-NAD(+) from nicotinate D-ribonucleotide: step 1/1. Functionally, catalyzes the reversible adenylation of nicotinate mononucleotide (NaMN) to nicotinic acid adenine dinucleotide (NaAD). The sequence is that of Probable nicotinate-nucleotide adenylyltransferase from Acholeplasma laidlawii (strain PG-8A).